A 338-amino-acid polypeptide reads, in one-letter code: Protein RecA (338 aa).

An ATP-binding site is contributed by 66 to 73 (GPESSGKT).

It belongs to the RecA family.

It localises to the cytoplasm. Can catalyze the hydrolysis of ATP in the presence of single-stranded DNA, the ATP-dependent uptake of single-stranded DNA by duplex DNA, and the ATP-dependent hybridization of homologous single-stranded DNAs. It interacts with LexA causing its activation and leading to its autocatalytic cleavage. In Geobacter sulfurreducens (strain ATCC 51573 / DSM 12127 / PCA), this protein is Protein RecA.